The chain runs to 202 residues: Ras-related protein ORAB-1 (202 aa).

GTP is bound by residues 15-23 (GDSGVGKSC), 33-40 (YTESYIST), 63-67 (DTAGQ), 121-124 (NKCD), and 151-153 (SAK). Residues 37-45 (YISTIGVDF) carry the Effector region motif. The segment at 173–202 (MGPGATSGGSEKSNVNIQSTPVKSSGGGCC) is disordered. A compositionally biased stretch (polar residues) spans 180 to 195 (GGSEKSNVNIQSTPVK). S-geranylgeranyl cysteine attachment occurs at residues Cys201 and Cys202.

Belongs to the small GTPase superfamily. Rab family.

The protein resides in the cell membrane. Protein transport. Probably involved in vesicular traffic. The chain is Ras-related protein ORAB-1 from Diplobatis ommata (Ocellated electric ray).